Reading from the N-terminus, the 340-residue chain is Phosphoribosylformylglycinamidine cyclo-ligase (340 aa).

This sequence belongs to the AIR synthase family.

It is found in the cytoplasm. The enzyme catalyses 2-formamido-N(1)-(5-O-phospho-beta-D-ribosyl)acetamidine + ATP = 5-amino-1-(5-phospho-beta-D-ribosyl)imidazole + ADP + phosphate + H(+). The protein operates within purine metabolism; IMP biosynthesis via de novo pathway; 5-amino-1-(5-phospho-D-ribosyl)imidazole from N(2)-formyl-N(1)-(5-phospho-D-ribosyl)glycinamide: step 2/2. The sequence is that of Phosphoribosylformylglycinamidine cyclo-ligase from Streptococcus pyogenes serotype M18 (strain MGAS8232).